A 307-amino-acid polypeptide reads, in one-letter code: Small ribosomal subunit biogenesis GTPase RsgA (307 aa).

One can recognise a CP-type G domain in the interval 82–240; sequence GRYGERIVVA…IADTPGLREV (159 aa). GTP-binding positions include 131–134 and 182–190; these read NKAD and GPSGVGKSS. Zn(2+) contacts are provided by C264, C269, H271, and C277.

The protein belongs to the TRAFAC class YlqF/YawG GTPase family. RsgA subfamily. As to quaternary structure, monomer. Associates with 30S ribosomal subunit, binds 16S rRNA. Requires Zn(2+) as cofactor.

The protein localises to the cytoplasm. Functionally, one of several proteins that assist in the late maturation steps of the functional core of the 30S ribosomal subunit. Helps release RbfA from mature subunits. May play a role in the assembly of ribosomal proteins into the subunit. Circularly permuted GTPase that catalyzes slow GTP hydrolysis, GTPase activity is stimulated by the 30S ribosomal subunit. This chain is Small ribosomal subunit biogenesis GTPase RsgA, found in Gemmatimonas aurantiaca (strain DSM 14586 / JCM 11422 / NBRC 100505 / T-27).